The chain runs to 220 residues: Adenylate kinase (220 aa).

10–15 is an ATP binding site; the sequence is GAGKGT. The NMP stretch occupies residues 30–59; it reads STGDMLRAAVKAGTPLGVEAKGYMDAGKLV. AMP is bound by residues threonine 31, arginine 36, 57-59, 85-88, and glutamine 92; these read KLV and GFPR. The interval 122–159 is LID; sequence GRRTHPASGRTYHVKFNPPKVEGHDDVTGEPLIQRDDD. Residues arginine 123 and 132-133 contribute to the ATP site; that span reads TY. AMP-binding residues include arginine 156 and arginine 167. Glycine 206 contributes to the ATP binding site.

Belongs to the adenylate kinase family. Monomer.

The protein localises to the cytoplasm. The enzyme catalyses AMP + ATP = 2 ADP. It functions in the pathway purine metabolism; AMP biosynthesis via salvage pathway; AMP from ADP: step 1/1. In terms of biological role, catalyzes the reversible transfer of the terminal phosphate group between ATP and AMP. Plays an important role in cellular energy homeostasis and in adenine nucleotide metabolism. This Burkholderia cenocepacia (strain HI2424) protein is Adenylate kinase.